The sequence spans 795 residues: METALAKTPQKRQVMFLAILLLLWEAGSEAVRYSIPEETESGYSVANLAKDLGLGVGELATRGARMHYKGNKELLQLDIKTGNLLLYEKLDREVICGATEPCILHFQLLLENPVQFFQTDLQLTDINDHSPEFPEKEMLLKIPESTQPGTVFPLKVAQDFDIGSNAVQNYTISPNSHFHVATHNRGDGRKYPELVLDKALDREERPELSLTLTALDGGAPPRSGTTTIRIVVLDNNDNAPEFLQSLYEVQVPENSPLNSLVVVVSARDLDAGAYGSVAYALFQGDEVTQPFVIDEKTGEIRLKRALDFEATPYYNVEIVATDGGGLSGKCTVAMEVVDVNDNAPELTMSTLSSPIPENAPETVVAVFSVSDPDSGDNGRMICSIQNDLPFLLKPTLKNFYTLVTQRTLDRESQAEYNITITVTDMGTPRLKTEHNITVLVSDVNDNAPAFTQTSYTLFVRENNSPALQIGSVSATDRDSGTNAQVTYSLLPPQNPHLRLASLVSINADNGHLFALRSLDYEALQAFEFRVGATDRGSPALSSEALVRVLVLDANDNSPFVLYPLQNGSAPCTELVPRAAEPGYLVTKVVAVDGDSGQNAWLSYQLLKATEPGLFSMWAHNGEVRTARLLSERDAAKHRLVVLVKDNGEPPRSATATLHVLLVDGFSQPYLPLPEAAPAQAQADSLTVYLVVALASVSSLFLFSVLLFVAVRLCRRSRAAPVGRCSVPEGPFPGHLVDVSGTGILSQSYQYEVCLTGDSGAGEFKFLKPIIPNLLPQGASEEIGKTAAFRNSFGLN.

An N-terminal signal peptide occupies residues 1–30; it reads METALAKTPQKRQVMFLAILLLLWEAGSEA. Topologically, residues 31-689 are extracellular; it reads VRYSIPEETE…AQADSLTVYL (659 aa). 5 Cadherin domains span residues 35-133, 138-242, 247-346, 351-450, and 455-560; these read IPEE…SPEF, MLLK…APEF, YEVQ…APEL, LSSP…APAF, and YTLF…SPFV. N-linked (GlcNAc...) asparagine glycosylation occurs at Asn-169. An N6-acetyllysine modification is found at Lys-296. Asn-417 and Asn-435 each carry an N-linked (GlcNAc...) asparagine glycan. The N-linked (GlcNAc...) asparagine glycan is linked to Asn-566. A Cadherin 6 domain is found at 567–670; the sequence is GSAPCTELVP…LVDGFSQPYL (104 aa). A helical membrane pass occupies residues 690-710; that stretch reads VVALASVSSLFLFSVLLFVAV. Over 711 to 795 the chain is Cytoplasmic; that stretch reads RLCRRSRAAP…AAFRNSFGLN (85 aa).

Its subcellular location is the cell membrane. Functionally, potential calcium-dependent cell-adhesion protein. May be involved in the establishment and maintenance of specific neuronal connections in the brain. The sequence is that of Protocadherin beta-5 (PCDHB5) from Pan troglodytes (Chimpanzee).